The primary structure comprises 92 residues: Small ribosomal subunit protein uS19 (92 aa).

This sequence belongs to the universal ribosomal protein uS19 family.

Functionally, protein S19 forms a complex with S13 that binds strongly to the 16S ribosomal RNA. The sequence is that of Small ribosomal subunit protein uS19 from Bartonella bacilliformis (strain ATCC 35685 / KC583 / Herrer 020/F12,63).